A 162-amino-acid polypeptide reads, in one-letter code: Protein A49R (162 aa).

Belongs to the poxviridae A49 protein family. As to quaternary structure, interacts with host BTRC; this interaction inhibits NF-kappa-B activation.

The protein resides in the host cytoplasm. It localises to the host nucleus. Its function is as follows. Plays a role in the inhibition of host NF-kappa-B activation. Interacts with host BTRC and thereby diminishes ubiquitination of NF-kappa-B inhibitor alpha/NFKBIA. This stabilizes NFKBIA and its interaction with NF-kappaB, so retaining p65/RELA in the cytoplasm and preventing NF-kappa-B-dependent gene expression. In Bos taurus (Bovine), this protein is Protein A49R.